Reading from the N-terminus, the 124-residue chain is Snake venom vascular endothelial growth factor toxin apiscin (124 aa).

Positions 1-24 (MAAYLLAVAILFCIQGWPSGTVQG) are cleaved as a signal peptide. Gln-25 is modified (pyrrolidone carboxylic acid). Cystine bridges form between Cys-38–Cys-80, Cys-69–Cys-115, and Cys-73–Cys-117.

Belongs to the PDGF/VEGF growth factor family. Snake venom VEGF subfamily. Homodimer; disulfide-linked. Interacts with VEGF receptor-1 (FLT1) with a high affinity, whereas it binds to VEGF receptor-2 (KDR) with a low affinity. Does not bind VEGF receptor-3 (FLT4). As to expression, expressed by the venom gland.

The protein localises to the secreted. Its function is as follows. Snake venom VEGFs that may contribute to venom dispersion and prey subjugation by inducing vascular permeability and hypotension. This protein induces an increase in capillary permeability after intradermal injection, as well as a drastic hypotensive effect after intravenous injection. The hypotension is mediated by nitric oxide (NO), which is produced by VEGF-activated endothelium NO synthase. Also induces angiogenesis in vitro. Like other crotalid VEGFs, this protein interacts with VEGF receptor-1 (FLT1) with a high affinity, whereas it binds to VEGF receptor-2 (KDR) with a low affinity. The polypeptide is Snake venom vascular endothelial growth factor toxin apiscin (Agkistrodon piscivorus piscivorus (Eastern cottonmouth)).